The following is a 672-amino-acid chain: Penicillin-binding protein activator LpoA (672 aa).

Positions 1–26 are cleaved as a signal peptide; it reads MLPFHLVRTQAGRVIPVLLAALFLAG. The N-palmitoyl cysteine moiety is linked to residue Cys27. Cys27 is lipidated: S-diacylglycerol cysteine. Residues 298-336 form a disordered region; that stretch reads APPTDTAQAGQVTPSSDGQNAQSPAPYSDQAVASTTPAP. The segment covering 305 to 322 has biased composition (polar residues); that stretch reads QAGQVTPSSDGQNAQSPA. Low complexity predominate over residues 327 to 336; sequence QAVASTTPAP.

It belongs to the LpoA family. As to quaternary structure, interacts with PBP1a.

The protein resides in the cell outer membrane. Functionally, regulator of peptidoglycan synthesis that is essential for the function of penicillin-binding protein 1A (PBP1a). The chain is Penicillin-binding protein activator LpoA from Pectobacterium parmentieri (strain WPP163) (Pectobacterium wasabiae (strain WPP163)).